An 883-amino-acid polypeptide reads, in one-letter code: Valine--tRNA ligase (883 aa).

A 'HIGH' region motif is present at residues 50-60; the sequence is PNVTGKLHMGH. Positions 527–531 match the 'KMSKS' region motif; sequence KMSKS. Lys530 contributes to the ATP binding site. Residues 811–883 are a coiled coil; it reads LNELIDLDEE…KQRLEQLQRA (73 aa). The disordered stretch occupies residues 859-883; sequence QRTKRSDFEDQLTSTKQRLEQLQRA.

This sequence belongs to the class-I aminoacyl-tRNA synthetase family. ValS type 1 subfamily. As to quaternary structure, monomer.

It localises to the cytoplasm. It catalyses the reaction tRNA(Val) + L-valine + ATP = L-valyl-tRNA(Val) + AMP + diphosphate. Its function is as follows. Catalyzes the attachment of valine to tRNA(Val). As ValRS can inadvertently accommodate and process structurally similar amino acids such as threonine, to avoid such errors, it has a 'posttransfer' editing activity that hydrolyzes mischarged Thr-tRNA(Val) in a tRNA-dependent manner. In Lacticaseibacillus casei (Lactobacillus casei), this protein is Valine--tRNA ligase.